The sequence spans 152 residues: Large ribosomal subunit protein bL9 (152 aa).

Belongs to the bacterial ribosomal protein bL9 family.

In terms of biological role, binds to the 23S rRNA. The chain is Large ribosomal subunit protein bL9 from Synechocystis sp. (strain ATCC 27184 / PCC 6803 / Kazusa).